Consider the following 359-residue polypeptide: MQTEHWGSLPAEDDGGQLTPDKYVPTAAKKLKLDEIRQRGDPQPQEKHHKLELRSALVTQTIEVMKQTEVLQSLIETYSNKNGSSNYLLNPCLMIPEVDFPPENAAELVGSQKFQKPIWFTPTVDTAYSRGDPEAYPEIPSSACRQAMRKVMCGMLRLAGFTDCSESAVQLLTDATEEFLRSFIGEYRGYYDSQPRLQNSTVLQLVPLERAHFAQTGTSLTQVHNYYKHKVLARNRAEIAEFNSVLQEYDKLMKESQSSMQKQHNEFNGHDFLNILDNSATGSSQSIGGMAMGDMLQDLGGSTGSSGTVSSQQMLYGLLDGQISSNTSNMTGTSGNGSTGGNGNGNGATISNFHATFET.

In terms of assembly, component of the Spt-Ada-Gcn5 acetyltransferase (SAGA) complex consisting of wda/Taf5L, Saf6, Taf9, Taf10b, Taf12, Ada1, Spt3, Spt7, Spt20, Sf3b3, Sf3b5, Nipped-A/Tra1, a histone acetyltransferase (HAT) module made up of Gcn5, Ada2b (Isoform B), Ada3 and Sgf29, and a deubiquitinase (DUB) module made up of not/nonstop, Sgf11 and e(y)2 tethered to SAGA by Atxn7. Interacts with Ada2b; the interaction is direct.

It is found in the nucleus. In terms of biological role, component of the transcription regulatory complex SAGA, a multiprotein complex that activates transcription by remodeling chromatin and mediating histone acetylation and deubiquitination. The SAGA complex predominantly acetylates histone H3. This Drosophila melanogaster (Fruit fly) protein is SAGA complex subunit Spt7.